The chain runs to 86 residues: Small ribosomal subunit protein uS17 (86 aa).

It belongs to the universal ribosomal protein uS17 family. As to quaternary structure, part of the 30S ribosomal subunit.

In terms of biological role, one of the primary rRNA binding proteins, it binds specifically to the 5'-end of 16S ribosomal RNA. The chain is Small ribosomal subunit protein uS17 from Halalkalibacterium halodurans (strain ATCC BAA-125 / DSM 18197 / FERM 7344 / JCM 9153 / C-125) (Bacillus halodurans).